The chain runs to 678 residues: Secretin ExeD (678 aa).

The N-terminal stretch at 1-25 (MINKGKSWRLATVAAALMMAGSAWA) is a signal peptide. Positions 26–122 (TEYSASFKNA…VVDETNPGIG (97 aa)) are N0. Residues 124 to 188 (EMVTRVVPVR…EVVRRVDKAG (65 aa)) form an N1 region. The segment at 189–264 (DQEVDIIKLR…MVRQLDRDLQ (76 aa)) is N2. An N3 region spans residues 267–347 (GNTRVFYLKY…ELEQVVAKLD (81 aa)). Residues 352–602 (QVLVEAIIVE…VFIRPTILRD (251 aa)) are secretin. The segment at 604–678 (HVYSGISSNK…GAQPFVQGNK (75 aa)) is s domain.

The protein belongs to the bacterial secretin family. GSP D subfamily. In terms of assembly, forms a cylindrical channel with 15 subunits.

The protein resides in the cell outer membrane. Involved in a type II secretion system (T2SS, formerly general secretion pathway, GSP) for the export of proteins. This subunit forms the outer membrane channel. This is Secretin ExeD (exeD) from Aeromonas salmonicida.